The following is a 459-amino-acid chain: Glycosyl hydrolase family 109 protein (459 aa).

A signal peptide (tat-type signal) is located at residues 1-31; the sequence is MHNIHRRNFLKAAGAATAGLVTANIALNAYA. NAD(+) contacts are provided by residues 64-65, Asp86, 135-138, 155-156, and Asn184; these read ER, WEWH, and EV. Substrate-binding positions include Tyr213, Arg232, 244–247, and Tyr326; that span reads YPTH. Tyr244 provides a ligand contact to NAD(+).

This sequence belongs to the Gfo/Idh/MocA family. Glycosyl hydrolase 109 subfamily. It depends on NAD(+) as a cofactor. Predicted to be exported by the Tat system. The position of the signal peptide cleavage has not been experimentally proven.

Glycosidase. This is Glycosyl hydrolase family 109 protein from Shewanella baltica (strain OS195).